The sequence spans 1321 residues: Bile salt export pump (1321 aa).

Residues 1–62 are Cytoplasmic-facing; it reads MSDSVILRSV…FSSWTDIWLM (62 aa). The 324-residue stretch at 62 to 385 folds into the ABC transmembrane type-1 1 domain; it reads MCMGSLCACI…ASPCLEAFAA (324 aa). Residues 63–83 form a helical membrane-spanning segment; it reads CMGSLCACIHGIAQPGVLLIF. Residues 84-147 lie on the Extracellular side of the membrane; sequence GTMTDVFIDY…MIRFAGYYAG (64 aa). N-linked (GlcNAc...) asparagine glycosylation is found at asparagine 109, asparagine 116, asparagine 122, and asparagine 125. Residues 148 to 168 form a helical membrane-spanning segment; the sequence is IGIAVLTTGYIQICFWGIAAA. The Cytoplasmic portion of the chain corresponds to 169 to 215; sequence HQIQKMRKSYFRKIMRMGIGWVDCNSVGKLNTPFSVDFNKINDSSAD. Residues 216–236 form a helical membrane-spanning segment; the sequence is QLAIFIQGMTSPIFGFLVGFS. Over 237 to 240 the chain is Extracellular; the sequence is QWWK. A helical membrane pass occupies residues 241–261; sequence LTLVIISVSPLIGLGAAIIGL. The Cytoplasmic segment spans residues 262–319; the sequence is SVSKFTDYELKAYAKAGSVADEVISSMRTVAAFGGEKKEVERYEKNLVFAQRWGIRKG. A helical transmembrane segment spans residues 320 to 340; that stretch reads IVMGFFTGYMWCLIFFCYALA. Residues 341–353 are Extracellular-facing; that stretch reads FWYGSKLVLEEGE. Residues 354–374 form a helical membrane-spanning segment; it reads YSPGALVQIFLSVIIGALNLG. Over 375 to 755 the chain is Cytoplasmic; the sequence is NASPCLEAFA…KLNAPEWPYM (381 aa). Positions 420–656 constitute an ABC transporter 1 domain; the sequence is IEFHNVTFHY…KGVYFALVTL (237 aa). Position 455-462 (455-462) interacts with ATP; that stretch reads GPSGAGKS. Threonine 586 carries the phosphothreonine modification. Serine 587 is subject to Phosphoserine. Positions 651–672 are interaction with HAX1; sequence FALVTLQSQRNQGDQEENEKDA. The interval 659 to 735 is disordered; sequence QRNQGDQEEN…KDKDLPAQED (77 aa). Residues 664 to 677 show a composition bias toward acidic residues; that stretch reads DQEENEKDATEDDI. A phosphoserine mark is found at serine 690, serine 701, and serine 704. Residues 714–731 show a composition bias toward basic and acidic residues; sequence VEDHKSTHEEDRKDKDLP. The ABC transmembrane type-1 2 domain occupies 755-1043; the sequence is MLLGSMGAAV…ASSYTPSYAK (289 aa). Residues 756–776 form a helical membrane-spanning segment; that stretch reads LLGSMGAAVNGAVTPLYAFLF. The Extracellular portion of the chain corresponds to 777–794; sequence SQILGTFSLPDKEEQRSQ. A helical membrane pass occupies residues 795–815; the sequence is INGICLLFVTLGCVSFFTQFL. Topologically, residues 816-869 are cytoplasmic; it reads QGYTFAKSGELLTKRLRKFGFRAMLGQDIGWFDDLRNSPGALTTRLATDASQVQ. The next 2 helical transmembrane spans lie at 870–890 and 891–911; these read GATG…TVAM and IIAF…FPFL. Residues 912 to 979 are Cytoplasmic-facing; it reads ALSGALQTKM…PYKMAIKKAN (68 aa). A helical transmembrane segment spans residues 980-1000; it reads VYGLCFGFSQCITFIANSASY. The Extracellular portion of the chain corresponds to 1001-1011; that stretch reads RYGGYLISNEG. A helical transmembrane segment spans residues 1012 to 1032; it reads LHFSYVFRVISAVVLSATALG. At 1033 to 1321 the chain is on the cytoplasmic side; the sequence is RASSYTPSYA…KLVTTGSPIS (289 aa). One can recognise an ABC transporter 2 domain in the interval 1078–1316; that stretch reads IDFVDCKFTY…KGAYYKLVTT (239 aa). Residue 1113–1120 participates in ATP binding; it reads GSSGCGKS. Residues serine 1214 and serine 1321 each carry the phosphoserine modification.

This sequence belongs to the ABC transporter superfamily. ABCB family. Multidrug resistance exporter (TC 3.A.1.201) subfamily. In terms of assembly, interacts with HAX1. Interacts with the adapter protein complex 2 (AP-2) throught AP2A2 or AP2A1; this interaction regulates cell membrane expression of ABCB11 through its internalization in a clathrin-dependent manner and its subsequent degradation. N-glycosylated. In terms of processing, ubiquitinated; short-chain ubiquitination regulates cell-Surface expression of ABCB11. As to expression, expressed predominantly, if not exclusively in the liver, where it was further localized to the canalicular microvilli and to subcanalicular vesicles of the hepatocytes by in situ.

It localises to the apical cell membrane. The protein localises to the recycling endosome membrane. The protein resides in the endosome. Its subcellular location is the cell membrane. The catalysed reaction is cholate(in) + ATP + H2O = cholate(out) + ADP + phosphate + H(+). It carries out the reaction taurocholate(in) + ATP + H2O = taurocholate(out) + ADP + phosphate + H(+). It catalyses the reaction glycocholate(in) + ATP + H2O = glycocholate(out) + ADP + phosphate + H(+). The enzyme catalyses glycochenodeoxycholate(in) + ATP + H2O = glycochenodeoxycholate(out) + ADP + phosphate + H(+). The catalysed reaction is taurochenodeoxycholate(in) + ATP + H2O = taurochenodeoxycholate(out) + ADP + phosphate + H(+). It carries out the reaction glycoursodeoxycholate(in) + ATP + H2O = glycoursodeoxycholate(out) + ADP + phosphate + H(+). It catalyses the reaction tauroursodeoxycholate(in) + ATP + H2O = tauroursodeoxycholate(out) + ADP + phosphate + H(+). The enzyme catalyses taurodeoxycholate(in) + ATP + H2O = taurodeoxycholate(out) + ADP + phosphate + H(+). The catalysed reaction is taurolithocholate 3-sulfate(in) + ATP + H2O = taurolithocholate 3-sulfate(out) + ADP + phosphate + H(+). It carries out the reaction pravastatin(in) + ATP + H2O = pravastatin(out) + ADP + phosphate + H(+). Its activity is regulated as follows. The uptake of taurocholate is inhibited by taurolithocholate sulfate with an IC(50) of 9 uM. Pravastatin competitively inhibits the transport of taurocholic acid. Cyclosporin A, glibenclamide, rifampicin and troglitazonestrongly competitively inhibit the transport activity of taurocholate. The canalicular transport activity of taurocholate is strongly dependent on canalicular membrane cholesterol content. The uptake of taurocholate is increased by short- and medium-chain fatty acids. Cholesterol increases transport capacity of taurocholate without affecting the affinity for the substrate. Its function is as follows. Catalyzes the transport of the major hydrophobic bile salts, such as taurine and glycine-conjugated cholic acid across the canalicular membrane of hepatocytes in an ATP-dependent manner, therefore participates in hepatic bile acid homeostasis and consequently to lipid homeostasis through regulation of biliary lipid secretion in a bile salts dependent manner. Transports taurine-conjugated bile salts more rapidly than glycine-conjugated bile salts. Also transports non-bile acid compounds, such as pravastatin and fexofenadine in an ATP-dependent manner and may be involved in their biliary excretion. In Oryctolagus cuniculus (Rabbit), this protein is Bile salt export pump.